Consider the following 955-residue polypeptide: MEASSSGITNGKNKVFHAEGGLDLQSHQLDMQILPDGPKSDVDFSEILNAIQEMAKDVNILFDELEAVNSPCKDDDSLLHPGNLTSTSEDTSRLEAGGETVRERNKSNGLYFRDGKCRIDYILVYRKSNPQTEKREVFERNIRAEGLQMEKESSLINSDIIFVKLHAPWEVLGRYAEQMNVRMPFRRKIYYLPRRYKFMSRIDKQISRFRRWLPKKPMRLDKETLPDLEENDCYTAPFSQQRIHHFIIHNKDTFFNNATRSRIVHHILQRIKYEEGKNKIGLNRLLTNGSYEAAFPLHEGSYRSKNSIKTHGAVNHRHLLYECWASWGVWYKYQPLDLVRRYFGEKIGLYFAWLGWYTGMLFPAAFIGLFVFLYGVTTLDHCQVSKEVCQATDIIMCPVCDKYCPFMRLSDSCVYAKVTHLFDNGATVFFAVFMAVWATVFLEFWKRRRAVIAYDWDLIDWEEEEEEIRPQFEAKYSKKERMNPISGKPEPYQAFTDKCSRLIVSASGIFFMICVVIAAVFGIVIYRVVTVSTFAAFKWALIRNNSQVATTGTAVCINFCIIMLLNVLYEKVALLLTNLEQPRTESEWENSFTLKMFLFQFVNLNSSTFYIAFFLGRFTGHPGAYLRLINRWRLEECHPSGCLIDLCMQMGIIMVLKQTWNNFMELGYPLIQNWWTRRKVRQEHGTERKINFPQWEKDYNLQPMNAYGLFDEYLEMILQFGFTTIFVAAFPLAPLLALLNNIIEIRLDAYKFVTQWRRPLASRAKDIGIWYGILEGIGILSVITNAFVIAITSDFIPRLVYAYKYGPCAGQGEAGQKCMVGYVNASLSVFRISDFENRSEPESDGSEFSGTPLKYCRYRDYRDPPHSLAPYGYTLQFWHVLAARLAFIIVFEHLVFCIKHLISYLIPDLPKDLRDRMRREKYLIQEMMYEAELERLQKERKERKKNGKAHHNEWP.

Residues 1 to 352 (MEASSSGITN…FGEKIGLYFA (352 aa)) are Cytoplasmic-facing. The interval 73–97 (KDDDSLLHPGNLTSTSEDTSRLEAG) is disordered. Residues 353-373 (WLGWYTGMLFPAAFIGLFVFL) form a helical membrane-spanning segment. Residues 374-424 (YGVTTLDHCQVSKEVCQATDIIMCPVCDKYCPFMRLSDSCVYAKVTHLFDN) are Extracellular-facing. The chain crosses the membrane as a helical span at residues 425–445 (GATVFFAVFMAVWATVFLEFW). The Cytoplasmic segment spans residues 446 to 505 (KRRRAVIAYDWDLIDWEEEEEEIRPQFEAKYSKKERMNPISGKPEPYQAFTDKCSRLIVS). A helical membrane pass occupies residues 506–526 (ASGIFFMICVVIAAVFGIVIY). The Extracellular segment spans residues 527 to 547 (RVVTVSTFAAFKWALIRNNSQ). A glycan (N-linked (GlcNAc...) asparagine) is linked at Asn544. A helical transmembrane segment spans residues 548-568 (VATTGTAVCINFCIIMLLNVL). Topologically, residues 569 to 595 (YEKVALLLTNLEQPRTESEWENSFTLK) are cytoplasmic. The helical transmembrane segment at 596–616 (MFLFQFVNLNSSTFYIAFFLG) threads the bilayer. Over 617-715 (RFTGHPGAYL…AYGLFDEYLE (99 aa)) the chain is Extracellular. A helical membrane pass occupies residues 716-736 (MILQFGFTTIFVAAFPLAPLL). The Cytoplasmic portion of the chain corresponds to 737 to 768 (ALLNNIIEIRLDAYKFVTQWRRPLASRAKDIG). A helical membrane pass occupies residues 769-789 (IWYGILEGIGILSVITNAFVI). The Extracellular segment spans residues 790–885 (AITSDFIPRL…QFWHVLAARL (96 aa)). Asn824 and Asn837 each carry an N-linked (GlcNAc...) asparagine glycan. The helical transmembrane segment at 886-906 (AFIIVFEHLVFCIKHLISYLI) threads the bilayer. The Cytoplasmic segment spans residues 907-955 (PDLPKDLRDRMRREKYLIQEMMYEAELERLQKERKERKKNGKAHHNEWP).

This sequence belongs to the anoctamin family. As to expression, predominantly expressed in neuronal tissues. Expressed at low levels in ovary, uterus, heart and brain.

Its subcellular location is the cell membrane. The enzyme catalyses a 1,2-diacyl-sn-glycero-3-phospho-L-serine(in) = a 1,2-diacyl-sn-glycero-3-phospho-L-serine(out). It catalyses the reaction a beta-D-galactosyl-(1&lt;-&gt;1')-N-acylsphing-4-enine(out) = a beta-D-galactosyl-(1&lt;-&gt;1')-N-acylsphing-4-enine(in). The catalysed reaction is a 1,2-diacyl-sn-glycero-3-phosphocholine(in) = a 1,2-diacyl-sn-glycero-3-phosphocholine(out). In terms of biological role, has calcium-dependent phospholipid scramblase activity; scrambles phosphatidylserine, phosphatidylcholine and galactosylceramide. Does not exhibit calcium-activated chloride channel (CaCC) activity. The protein is Anoctamin-4 of Mus musculus (Mouse).